We begin with the raw amino-acid sequence, 195 residues long: Small ribosomal subunit protein eS1 (195 aa).

This sequence belongs to the eukaryotic ribosomal protein eS1 family.

The sequence is that of Small ribosomal subunit protein eS1 from Methanothermobacter thermautotrophicus (strain ATCC 29096 / DSM 1053 / JCM 10044 / NBRC 100330 / Delta H) (Methanobacterium thermoautotrophicum).